The primary structure comprises 118 residues: Succinate dehydrogenase assembly factor 1, mitochondrial (118 aa).

The short motif at 14 to 16 (LYR) is the LYR motif 1; required for interaction with HSC20 element. An LYR motif 2; not required for interaction with HSC20 motif is present at residues 53–55 (LYR). Positions 53 to 65 (LYRRGRRQLQLLR) are interaction with SDHB. Residues 68–118 (HATAMGTFVRPRGPAEEPGDATAPGTRLDDGGAPKNSCEDTGARETRSDGR) are disordered. Residues 94–118 (RLDDGGAPKNSCEDTGARETRSDGR) are compositionally biased toward basic and acidic residues.

Belongs to the complex I LYR family. SDHAF1 subfamily. In terms of assembly, interacts with SDHB within an SDHA-SDHB subcomplex. Also interacts with the iron-sulfur transfer complex formed by HSC20, HSPA9 and ISCU through direct binding to HSC20. Binding of SDHAF1 to SDHB precedes and is necessary for recruitment of the iron-sulfur transfer complex by SDHAF1.

Its subcellular location is the mitochondrion matrix. Plays an essential role in the assembly of succinate dehydrogenase (SDH), an enzyme complex (also referred to as respiratory complex II) that is a component of both the tricarboxylic acid (TCA) cycle and the mitochondrial electron transport chain, and which couples the oxidation of succinate to fumarate with the reduction of ubiquinone (coenzyme Q) to ubiquinol. Promotes maturation of the iron-sulfur protein subunit Sdhb of the SDH catalytic dimer, protecting it from the deleterious effects of oxidants. May act together with SDHAF3. Contributes to iron-sulfur cluster incorporation into SDHB by binding to SDHB and recruiting the iron-sulfur transfer complex formed by HSC20, HSPA9 and ISCU through direct binding to HSC20. This chain is Succinate dehydrogenase assembly factor 1, mitochondrial, found in Mus musculus (Mouse).